Consider the following 200-residue polypeptide: Probable nicotinate-nucleotide adenylyltransferase (200 aa).

Belongs to the NadD family.

The catalysed reaction is nicotinate beta-D-ribonucleotide + ATP + H(+) = deamido-NAD(+) + diphosphate. It functions in the pathway cofactor biosynthesis; NAD(+) biosynthesis; deamido-NAD(+) from nicotinate D-ribonucleotide: step 1/1. Its function is as follows. Catalyzes the reversible adenylation of nicotinate mononucleotide (NaMN) to nicotinic acid adenine dinucleotide (NaAD). This is Probable nicotinate-nucleotide adenylyltransferase from Leifsonia xyli subsp. xyli (strain CTCB07).